A 69-amino-acid polypeptide reads, in one-letter code: Large ribosomal subunit protein bL28 (69 aa).

It belongs to the bacterial ribosomal protein bL28 family.

This chain is Large ribosomal subunit protein bL28, found in Lawsonia intracellularis (strain PHE/MN1-00).